We begin with the raw amino-acid sequence, 391 residues long: NADH-quinone oxidoreductase subunit D (391 aa).

This sequence belongs to the complex I 49 kDa subunit family. NDH-1 is composed of 14 different subunits. Subunits NuoB, C, D, E, F, and G constitute the peripheral sector of the complex.

The protein localises to the cell inner membrane. It catalyses the reaction a quinone + NADH + 5 H(+)(in) = a quinol + NAD(+) + 4 H(+)(out). In terms of biological role, NDH-1 shuttles electrons from NADH, via FMN and iron-sulfur (Fe-S) centers, to quinones in the respiratory chain. The immediate electron acceptor for the enzyme in this species is believed to be ubiquinone. Couples the redox reaction to proton translocation (for every two electrons transferred, four hydrogen ions are translocated across the cytoplasmic membrane), and thus conserves the redox energy in a proton gradient. The chain is NADH-quinone oxidoreductase subunit D from Rickettsia canadensis (strain McKiel).